Consider the following 88-residue polypeptide: LYR motif-containing protein 2 (88 aa).

A mitochondrion-targeting transit peptide spans 1 to 19; that stretch reads MATSRLPPATLTLKQFMRR.

The protein belongs to the complex I LYR family.

The protein resides in the mitochondrion. Involved in efficient integration of the N-module into mitochondrial respiratory chain complex I. The chain is LYR motif-containing protein 2 (LYRM2) from Bos taurus (Bovine).